Reading from the N-terminus, the 176-residue chain is Crossover junction endodeoxyribonuclease RuvC (176 aa).

Active-site residues include D7, E68, and D141. Residues D7, E68, and D141 each coordinate Mg(2+).

It belongs to the RuvC family. As to quaternary structure, homodimer which binds Holliday junction (HJ) DNA. The HJ becomes 2-fold symmetrical on binding to RuvC with unstacked arms; it has a different conformation from HJ DNA in complex with RuvA. In the full resolvosome a probable DNA-RuvA(4)-RuvB(12)-RuvC(2) complex forms which resolves the HJ. Mg(2+) serves as cofactor.

It localises to the cytoplasm. The enzyme catalyses Endonucleolytic cleavage at a junction such as a reciprocal single-stranded crossover between two homologous DNA duplexes (Holliday junction).. In terms of biological role, the RuvA-RuvB-RuvC complex processes Holliday junction (HJ) DNA during genetic recombination and DNA repair. Endonuclease that resolves HJ intermediates. Cleaves cruciform DNA by making single-stranded nicks across the HJ at symmetrical positions within the homologous arms, yielding a 5'-phosphate and a 3'-hydroxyl group; requires a central core of homology in the junction. The consensus cleavage sequence is 5'-(A/T)TT(C/G)-3'. Cleavage occurs on the 3'-side of the TT dinucleotide at the point of strand exchange. HJ branch migration catalyzed by RuvA-RuvB allows RuvC to scan DNA until it finds its consensus sequence, where it cleaves and resolves the cruciform DNA. The chain is Crossover junction endodeoxyribonuclease RuvC from Streptomyces avermitilis (strain ATCC 31267 / DSM 46492 / JCM 5070 / NBRC 14893 / NCIMB 12804 / NRRL 8165 / MA-4680).